The following is a 289-amino-acid chain: Rhodopsin (289 aa).

Residues 1 to 7 (YLVNPAA) lie on the Extracellular side of the membrane. Residues 8–32 (YAALGAYMFLLILIGFPVNFLTLYV) form a helical membrane-spanning segment. Residues 33–44 (TIEHKKLRTPLN) lie on the Cytoplasmic side of the membrane. Residues 45 to 67 (YILLNLAVANLFMVLGGFTTTMY) form a helical membrane-spanning segment. Residues 68 to 81 (TSMHGYFVLGRLGC) lie on the Extracellular side of the membrane. Residues Cys-81 and Cys-158 are joined by a disulfide bond. The helical transmembrane segment at 82 to 104 (NLEGFFATMGGEIALWSLVVLAI) threads the bilayer. Residues 105-107 (ERW) carry the 'Ionic lock' involved in activated form stabilization motif. Over 105-123 (ERWIVVCKPISNFRFTEDH) the chain is Cytoplasmic. A helical membrane pass occupies residues 124 to 144 (AIMGLAFTWVMALSCAVPPLV). Topologically, residues 145-173 (GWSRYIPEGMQCSCGVDYYTRAEGFNNES) are extracellular. Asn-171 carries an N-linked (GlcNAc...) asparagine glycan. The helical transmembrane segment at 174–195 (FVIYMFIVHFLTPLIIISFCYG) threads the bilayer. The Cytoplasmic segment spans residues 196-223 (RLLCAVKEAAAAQQESETTQRAEREVSR). A helical transmembrane segment spans residues 224 to 245 (MVVMMVISFLMCWLPYASVAWY). Residues 246-257 (IFCNQGSEFGPI) lie on the Extracellular side of the membrane. The helical transmembrane segment at 258–279 (FMTLPAFFAKSSAIYNPLIYIC) threads the bilayer. Lys-267 bears the N6-(retinylidene)lysine mark. At 280–289 (MNKQFRHCMI) the chain is on the cytoplasmic side.

Belongs to the G-protein coupled receptor 1 family. Opsin subfamily. Phosphorylated on some or all of the serine and threonine residues present in the C-terminal region. In terms of processing, contains one covalently linked retinal chromophore.

It localises to the membrane. It is found in the cell projection. The protein resides in the cilium. The protein localises to the photoreceptor outer segment. In terms of biological role, photoreceptor required for image-forming vision at low light intensity. While most salt water fish species use retinal as chromophore, most freshwater fish use 3-dehydroretinal, or a mixture of retinal and 3-dehydroretinal. Light-induced isomerization of 11-cis to all-trans retinal triggers a conformational change that activates signaling via G-proteins. Subsequent receptor phosphorylation mediates displacement of the bound G-protein alpha subunit by arrestin and terminates signaling. The chain is Rhodopsin (rho) from Cottocomephorus inermis (Longfin Baikal sculpin).